A 1079-amino-acid chain; its full sequence is Adhesion G-protein coupled receptor F3 (1079 aa).

Residues 1-25 (MVCSAAPLLLLATTLPLLGSPVAQA) form the signal peptide. Residues 26–775 (SQPVSETGVR…EEPALALLTQ (750 aa)) are Extracellular-facing. 6 N-linked (GlcNAc...) asparagine glycosylation sites follow: Asn188, Asn264, Asn301, Asn382, Asn441, and Asn648. The region spanning 599 to 765 (HPFAFSLPNV…SVLMSPHTVP (167 aa)) is the GAIN-B domain. 2 disulfide bridges follow: Cys715–Cys747 and Cys734–Cys749. A GPS region spans residues 715–765 (CVFWDHSLFQGRGGWSKEGCQAQVASASPTAQCLCQHLTAFSVLMSPHTVP). The helical transmembrane segment at 776–796 (VGLGASILALLVCLGVYWLVW) threads the bilayer. The Cytoplasmic portion of the chain corresponds to 797 to 811 (RVVVRNKISYFRHAA). Residues 812 to 832 (LLNMVFCLLAADTCFLGAPFL) traverse the membrane as a helical segment. Over 833 to 851 (SPGPRSPLCLAAAFLCHFL) the chain is Extracellular. A helical transmembrane segment spans residues 852–874 (YLATFFWMLAQALVLAHQLLFVF). Residues 875-881 (HQLAKHR) are Cytoplasmic-facing. The chain crosses the membrane as a helical span at residues 882–902 (VLPLMVLLGYLCPLGLAGVTL). The Extracellular segment spans residues 903–928 (GLYLPQGQYLREGECWLDGKGGALYT). A helical transmembrane segment spans residues 929-949 (FVGPVLAIIGVNGLVLAMAML). Topologically, residues 950–973 (KLLRPSLSEGPPAEKRQALLGVIK) are cytoplasmic. The chain crosses the membrane as a helical span at residues 974–994 (ALLILTPIFGLTWGLGLATLL). The Extracellular portion of the chain corresponds to 995-1002 (EEVSTVPH). Residues 1003–1023 (YIFTILNTLQGVFILLFGCLM) traverse the membrane as a helical segment. Over 1024–1079 (DRKIQEALRKRFCRAQAPSSTISLVSCCLQILSCASKSMSEGIPWPSSEDMGTARS) the chain is Cytoplasmic.

The protein belongs to the G-protein coupled receptor 2 family. Adhesion G-protein coupled receptor (ADGR) subfamily. In terms of assembly, heterodimer of 2 chains generated by proteolytic processing; the large extracellular N-terminal fragment and the membrane-bound C-terminal fragment predominantly remain associated and non-covalently linked. In terms of processing, autoproteolytically processed at the GPS region of the GAIN-B domain; this cleavage modulates receptor activity.

It localises to the membrane. Its function is as follows. Orphan receptor. This Homo sapiens (Human) protein is Adhesion G-protein coupled receptor F3 (ADGRF3).